The primary structure comprises 186 residues: Pyridoxal 5'-phosphate synthase subunit PdxT (186 aa).

47–49 (GES) contacts L-glutamine. The Nucleophile role is filled by C79. L-glutamine contacts are provided by residues R106 and 134 to 135 (IR). Residues H170 and E172 each act as charge relay system in the active site.

The protein belongs to the glutaminase PdxT/SNO family. As to quaternary structure, in the presence of PdxS, forms a dodecamer of heterodimers. Only shows activity in the heterodimer.

It catalyses the reaction aldehydo-D-ribose 5-phosphate + D-glyceraldehyde 3-phosphate + L-glutamine = pyridoxal 5'-phosphate + L-glutamate + phosphate + 3 H2O + H(+). The enzyme catalyses L-glutamine + H2O = L-glutamate + NH4(+). It functions in the pathway cofactor biosynthesis; pyridoxal 5'-phosphate biosynthesis. Catalyzes the hydrolysis of glutamine to glutamate and ammonia as part of the biosynthesis of pyridoxal 5'-phosphate. The resulting ammonia molecule is channeled to the active site of PdxS. This is Pyridoxal 5'-phosphate synthase subunit PdxT from Methanothrix thermoacetophila (strain DSM 6194 / JCM 14653 / NBRC 101360 / PT) (Methanosaeta thermophila).